Here is a 521-residue protein sequence, read N- to C-terminus: Citrinin biosynthesis cluster MFS transporter ctnC (521 aa).

The interval 1-29 (MKEEIDAPVSTDASGTDLENARDQPSGEK) is disordered. 8 consecutive transmembrane segments (helical) span residues 58-78 (SLIT…SSVF), 95-115 (VMTL…LVWG), 124-144 (LKPL…VAVA), 155-175 (FFLG…LADF), 182-202 (AIAI…GPIM), 237-257 (WTAW…FLTL), 313-333 (ILVC…LFFV), and 349-369 (GIAA…CLLV). Asn-383 carries N-linked (GlcNAc...) asparagine glycosylation. The next 4 helical transmembrane spans lie at 392-412 (LPPM…FGWT), 417-437 (ISWA…LMIW), 465-485 (AVSA…GVDW), and 489-509 (LLGF…FYGA).

Belongs to the major facilitator superfamily. CAR1 family.

It localises to the membrane. In terms of biological role, MFS transporter; part of the gene cluster that mediates the biosynthesis the mycotoxin citrinin, a hepato-nephrotoxic compound to humans due to inhibition of respiration complex III. This chain is Citrinin biosynthesis cluster MFS transporter ctnC (ctnC), found in Monascus purpureus (Red mold).